A 646-amino-acid polypeptide reads, in one-letter code: Lipoteichoic acid synthase (646 aa).

Residues 1–7 (MSLPKKK) are Cytoplasmic-facing. The chain crosses the membrane as a helical span at residues 8–28 (IGIFAFFLLTVFTITLKTYFS). At 29-43 (YYVDFSLGVKGLVQN) the chain is on the extracellular side. The helical transmembrane segment at 44 to 64 (LILIMNPYSLIALVLSVFLFF) threads the bilayer. Residues 65 to 68 (KGKK) lie on the Cytoplasmic side of the membrane. A helical membrane pass occupies residues 69 to 89 (AFWFIFIGGFLLTFLLYANVV). At 90–119 (YFRFFSDFLTFSTLNQAGNVESMGGAVSAS) the chain is on the extracellular side. A helical membrane pass occupies residues 120–140 (FKWYDFVYFIDTIIYLAILIF). Residues 141 to 153 (KRKWLDNRAFSKK) lie on the Cytoplasmic side of the membrane. A helical membrane pass occupies residues 154-174 (FVPVVMATSVALFFLNLAFAE). Topologically, residues 175 to 646 (TDRPELLTRT…KSGPKGNEKK (472 aa)) are extracellular. 2 residues coordinate Mn(2+): glutamate 255 and threonine 300. The active site involves threonine 300. Residue histidine 416 coordinates substrate. Residues aspartate 475 and histidine 476 each contribute to the Mn(2+) site.

It belongs to the LTA synthase family. In terms of processing, proteolytically cleaved.

The protein localises to the cell membrane. It localises to the secreted. Its pathway is cell wall biogenesis; lipoteichoic acid biosynthesis. Its function is as follows. Catalyzes the polymerization of lipoteichoic acid (LTA) polyglycerol phosphate, a reaction that presumably uses phosphatidylglycerol (PG) as substrate. Is required for staphylococcal growth and cell division process. In Staphylococcus epidermidis (strain ATCC 12228 / FDA PCI 1200), this protein is Lipoteichoic acid synthase (ltaS).